We begin with the raw amino-acid sequence, 319 residues long: Aliphatic sulfonates import ATP-binding protein SsuB 1 (319 aa).

An ABC transporter domain is found at 63 to 282; the sequence is VTLSGVSKRF…ARASAAFAAL (220 aa). 95 to 102 serves as a coordination point for ATP; that stretch reads GRSGCGKS.

It belongs to the ABC transporter superfamily. Aliphatic sulfonates importer (TC 3.A.1.17.2) family. As to quaternary structure, the complex is composed of two ATP-binding proteins (SsuB), two transmembrane proteins (SsuC) and a solute-binding protein (SsuA).

It localises to the cell inner membrane. It catalyses the reaction ATP + H2O + aliphatic sulfonate-[sulfonate-binding protein]Side 1 = ADP + phosphate + aliphatic sulfonateSide 2 + [sulfonate-binding protein]Side 1.. Functionally, part of the ABC transporter complex SsuABC involved in aliphatic sulfonates import. Responsible for energy coupling to the transport system. The sequence is that of Aliphatic sulfonates import ATP-binding protein SsuB 1 from Burkholderia cenocepacia (strain HI2424).